We begin with the raw amino-acid sequence, 688 residues long: Glycine--tRNA ligase beta subunit (688 aa).

It belongs to the class-II aminoacyl-tRNA synthetase family. In terms of assembly, tetramer of two alpha and two beta subunits.

It is found in the cytoplasm. It carries out the reaction tRNA(Gly) + glycine + ATP = glycyl-tRNA(Gly) + AMP + diphosphate. The protein is Glycine--tRNA ligase beta subunit of Actinobacillus pleuropneumoniae serotype 7 (strain AP76).